Reading from the N-terminus, the 148-residue chain is Large ribosomal subunit protein uL11 (148 aa).

The interval 89–108 (EKKKGSGAHKPGKEKVGQVT) is disordered.

The protein belongs to the universal ribosomal protein uL11 family. Part of the ribosomal stalk of the 50S ribosomal subunit. Interacts with L10 and the large rRNA to form the base of the stalk. L10 forms an elongated spine to which L12 dimers bind in a sequential fashion forming a multimeric L10(L12)X complex. In terms of processing, one or more lysine residues are methylated.

Its function is as follows. Forms part of the ribosomal stalk which helps the ribosome interact with GTP-bound translation factors. This chain is Large ribosomal subunit protein uL11, found in Anaeromyxobacter sp. (strain Fw109-5).